The following is a 470-amino-acid chain: Glutamyl-tRNA reductase (470 aa).

Substrate-binding positions include 49–52 (TCNR), serine 109, 114–116 (ESQ), and glutamine 120. Catalysis depends on cysteine 50, which acts as the Nucleophile. NADP(+) is bound at residue 223 to 228 (GAGAVG).

This sequence belongs to the glutamyl-tRNA reductase family. Homodimer.

It carries out the reaction (S)-4-amino-5-oxopentanoate + tRNA(Glu) + NADP(+) = L-glutamyl-tRNA(Glu) + NADPH + H(+). It functions in the pathway porphyrin-containing compound metabolism; protoporphyrin-IX biosynthesis; 5-aminolevulinate from L-glutamyl-tRNA(Glu): step 1/2. In terms of biological role, catalyzes the NADPH-dependent reduction of glutamyl-tRNA(Glu) to glutamate 1-semialdehyde (GSA). The sequence is that of Glutamyl-tRNA reductase from Frankia alni (strain DSM 45986 / CECT 9034 / ACN14a).